Here is an 88-residue protein sequence, read N- to C-terminus: Early E1B 9 kDa protein (88 aa).

The tract at residues 23-88 (NMEGSQDEDN…DLFPELRRLP (66 aa)) is disordered. Residues 34–44 (RLLASAASGSS) show a composition bias toward low complexity.

The chain is Early E1B 9 kDa protein from Homo sapiens (Human).